Consider the following 170-residue polypeptide: Protein SOB FIVE-LIKE 5 (170 aa).

The SOFL-A motif lies at 10-15 (SGWTLY). A disordered region spans residues 17–78 (DQSVSSPSPS…GPRNISEEDS (62 aa)). Residues 35 to 44 (DSRRRSKDSW) are compositionally biased toward basic and acidic residues. The short motif at 61-70 (SMISDASSGP) is the SOFL-B element. The short motif at 79-86 (VKKINIVG) is the Nuclear localization signal element.

This sequence belongs to the SOFL plant protein family. As to expression, expressed in seedlings, roots, flowers and siliques. Barely detectable in leaves.

It localises to the cytoplasm. The protein localises to the nucleus. Its function is as follows. Involved in cytokinin-mediated development. This Arabidopsis thaliana (Mouse-ear cress) protein is Protein SOB FIVE-LIKE 5.